The primary structure comprises 684 residues: MLPPPKSAAVQIVRPPSPSSEKAKEKEKKHSPEKRETAQRICRNVMIYGYCKYQDQGCIYYHPPAGADPSTPQNSSPVAHAPTPSAPTPLAGTPAREKPTLSIEHLAAPVFVPKGLDSSPRASTPSVPTPSAPTPPVWPSLPSTGLLPRQDVQVSAQPSHAQLSATASPMAYDDPSHIALSAAHAHAQAQALTHGILDPHAHAPPVDQSMYLPPRQPLDYNLYAAPLPSIGGNPLYPTHPHAFFVSDDLRRAIQAKQEAVYAGANGASAPGLPQELGVYHSLIPLPLPAPTAQCPPTQSQPSKVYGLPSPVYRATSEVDGNTYCLRRVEGFKLVNQLAFASMDTWRRMRHPNIVGLKEAFTTKTFGDNSLIMVYDYHPLSTTLYDEYLSPNPPEPSPASALANQPPKRRSSPPERILWSYVTQIANALKAIHSSGLAVRNLDASKILLTGKNRIRLNGCGVWDVLAFDNKTPVQAFQQEDLLSFGKLIISLTCDFFQPTLPFSLPLEHISRHYSSDLSNLILYLISKPAQGQIKSIDEVVKMMGPRILNELDAVQSYADVLENELGAEVENGRIVRLLTKLGFINERAEFELDPRWSDTGDRYILKLFRDYVFHSVGVDGKPILDLSHVLVCLNKLDAGLDERVMLVSRDDQSCLVVSYREIKHCIEAAFNELKNAGNNHRVHR.

Disordered stretches follow at residues 1–38 (MLPPPKSAAVQIVRPPSPSSEKAKEKEKKHSPEKRETA), 68–97 (DPSTPQNSSPVAHAPTPSAPTPLAGTPARE), and 112–146 (VPKGLDSSPRASTPSVPTPSAPTPPVWPSLPSTGL). A compositionally biased stretch (basic and acidic residues) spans 21-38 (EKAKEKEKKHSPEKRETA). Residues 36–65 (ETAQRICRNVMIYGYCKYQDQGCIYYHPPA) form a C3H1-type zinc finger. Residues 127–139 (VPTPSAPTPPVWP) are compositionally biased toward pro residues. Residues 263–544 (GANGASAPGL…SIDEVVKMMG (282 aa)) form a pseudokinase domain region. ATP is bound by residues R326 and 375–382 (DYHPLSTT). The segment at 387 to 412 (YLSPNPPEPSPASALANQPPKRRSSP) is disordered. ATP is bound at residue 444–445 (SK). Residues 545–583 (PRILNELDAVQSYADVLENELGAEVENGRIVRLLTKLGF) are a coiled coil. A knob domain region spans residues 584–684 (INERAEFELD…NAGNNHRVHR (101 aa)).

Belongs to the protein kinase superfamily. PAN3 family. As to quaternary structure, homodimer. Forms a heterotrimer with a catalytic subunit PAN2 to form the poly(A)-nuclease (PAN) deadenylation complex. Interacts (via PAM-2 motif) with poly(A)-binding protein PAB1 (via PABC domain), conferring substrate specificity of the enzyme complex.

Its subcellular location is the cytoplasm. Its function is as follows. Regulatory subunit of the poly(A)-nuclease (PAN) deadenylation complex, one of two cytoplasmic mRNA deadenylases involved in mRNA turnover. PAN specifically shortens poly(A) tails of RNA and the activity is stimulated by poly(A)-binding protein PAB1. PAN deadenylation is followed by rapid degradation of the shortened mRNA tails by the CCR4-NOT complex. Deadenylated mRNAs are then degraded by two alternative mechanisms, namely exosome-mediated 3'-5' exonucleolytic degradation, or deadenylation-dependent mRNA decaping and subsequent 5'-3' exonucleolytic degradation by XRN1. May also be involved in post-transcriptional maturation of mRNA poly(A) tails. PAN3 acts as a positive regulator for PAN activity, recruiting the catalytic subunit PAN2 to mRNA via its interaction with RNA and with PAB1. In Cryptococcus neoformans var. neoformans serotype D (strain B-3501A) (Filobasidiella neoformans), this protein is PAN2-PAN3 deadenylation complex subunit PAN3.